Here is a 367-residue protein sequence, read N- to C-terminus: NADH-quinone oxidoreductase subunit D (367 aa).

Belongs to the complex I 49 kDa subunit family. In terms of assembly, NDH-1 is composed of 14 different subunits. Subunits NuoB, C, D, E, F, and G constitute the peripheral sector of the complex.

The protein localises to the cell membrane. It catalyses the reaction a quinone + NADH + 5 H(+)(in) = a quinol + NAD(+) + 4 H(+)(out). In terms of biological role, NDH-1 shuttles electrons from NADH, via FMN and iron-sulfur (Fe-S) centers, to quinones in the respiratory chain. The immediate electron acceptor for the enzyme in this species is believed to be ubiquinone. Couples the redox reaction to proton translocation (for every two electrons transferred, four hydrogen ions are translocated across the cytoplasmic membrane), and thus conserves the redox energy in a proton gradient. The polypeptide is NADH-quinone oxidoreductase subunit D (Dehalococcoides mccartyi (strain ATCC BAA-2266 / KCTC 15142 / 195) (Dehalococcoides ethenogenes (strain 195))).